The chain runs to 424 residues: S-adenosylmethionine synthase (424 aa).

His-16 contacts ATP. Residue Asp-18 coordinates Mg(2+). Glu-44 lines the K(+) pocket. The L-methionine site is built by Glu-57 and Gln-100. Residues 100–110 (QSPDIAQGVNT) form a flexible loop region. ATP-binding positions include 175–177 (DGK), 251–252 (KF), Asp-260, 266–267 (RK), Ala-283, and Lys-287. Position 260 (Asp-260) interacts with L-methionine. Lys-291 serves as a coordination point for L-methionine.

This sequence belongs to the AdoMet synthase family. Homotetramer; dimer of dimers. It depends on Mg(2+) as a cofactor. The cofactor is K(+).

Its subcellular location is the cytoplasm. The catalysed reaction is L-methionine + ATP + H2O = S-adenosyl-L-methionine + phosphate + diphosphate. The protein operates within amino-acid biosynthesis; S-adenosyl-L-methionine biosynthesis; S-adenosyl-L-methionine from L-methionine: step 1/1. Its function is as follows. Catalyzes the formation of S-adenosylmethionine (AdoMet) from methionine and ATP. The overall synthetic reaction is composed of two sequential steps, AdoMet formation and the subsequent tripolyphosphate hydrolysis which occurs prior to release of AdoMet from the enzyme. This Nostoc punctiforme (strain ATCC 29133 / PCC 73102) protein is S-adenosylmethionine synthase.